The sequence spans 561 residues: Probable xyloglucan galactosyltransferase GT20 (561 aa).

The Cytoplasmic segment spans residues 1–31 (MVSKRKSRTSKTIEDSCIHLCSVFFRFLYYT). Residues 32–52 (LPALFLFFFLLYLCLSFTTGI) form a helical; Signal-anchor for type II membrane protein membrane-spanning segment. Residues 53-561 (SYNNFHMCIF…LLKKINRSVV (509 aa)) are Lumenal-facing. Residues Asn87, Asn253, Asn277, Asn418, Asn421, and Asn557 are each glycosylated (N-linked (GlcNAc...) asparagine).

It belongs to the glycosyltransferase 47 family. Expressed in hydathodes.

It is found in the golgi apparatus membrane. Functionally, functions in xyloglucan synthesis by adding side chains to the xylosylated glucan backbone. Involved in the galactosylation of hemicellulose xyloglucan. The chain is Probable xyloglucan galactosyltransferase GT20 from Arabidopsis thaliana (Mouse-ear cress).